We begin with the raw amino-acid sequence, 207 residues long: MDTLIKEFDVALRAIAGATRTARANPADRLAPDTEQMSADERRHVAGLMRINHVGEVCAQALYQAQKLTARDGAVRAQMDAAAREEEDHLAWCAERLRELGSRPSLLNPLWYAGAFAIGWMAGRAGDRVSLGFVAETERQVEHHLGGHLDRLPEADGRSRAILEQMRDDEIRHGNAARDAGGIPLPAPVRALMRGASRVMTTAAYRI.

Positions 56, 86, 89, 138, 170, and 173 each coordinate Fe cation.

It belongs to the COQ7 family. The cofactor is Fe cation.

Its subcellular location is the cell membrane. It catalyses the reaction a 5-methoxy-2-methyl-3-(all-trans-polyprenyl)benzene-1,4-diol + AH2 + O2 = a 3-demethylubiquinol + A + H2O. The protein operates within cofactor biosynthesis; ubiquinone biosynthesis. Catalyzes the hydroxylation of 2-nonaprenyl-3-methyl-6-methoxy-1,4-benzoquinol during ubiquinone biosynthesis. The protein is 3-demethoxyubiquinol 3-hydroxylase of Cupriavidus necator (strain ATCC 17699 / DSM 428 / KCTC 22496 / NCIMB 10442 / H16 / Stanier 337) (Ralstonia eutropha).